The sequence spans 270 residues: (+)-cis,cis-nepetalactol synthase NEPS3 (270 aa).

NAD(+)-binding positions include Gly-21–Gly-27, Asp-46–Gln-48, Asp-70–Val-71, Asn-97, Tyr-165–Lys-169, and Val-198–Leu-202.

This sequence belongs to the short-chain dehydrogenases/reductases (SDR) family. As to quaternary structure, forms homotetramers.

The catalysed reaction is (S)-8-oxocitronellyl enol = cis-cis-nepetalactol. Functionally, functions as a non-oxidoreductive cyclase to promote the formation of cis-cis-nepetalactol. Cis-cis-nepetalactol is then oxidized by NEPS1 into cis-cis-nepetalactone, which belongs to a family of metabolites that are both insect-repellent and have euphoric effect in cats. Binds NAD(+) as classical short-chain dehydrogenase/reductase (SDR), but does not utilize it for its redox-neutral cyclase activity. The polypeptide is (+)-cis,cis-nepetalactol synthase NEPS3 (Nepeta racemosa (Catmint)).